Here is a 403-residue protein sequence, read N- to C-terminus: Serine/threonine transporter SstT (403 aa).

9 helical membrane-spanning segments follow: residues 14-34 (VTQI…APAI), 44-64 (VFVS…VMAS), 79-99 (ILWL…VASM), 138-158 (ALLN…GVAL), 175-195 (GVTL…FGLV), 214-234 (LAVL…LIVF), 295-315 (MAGA…TLGI), 327-347 (VVAA…LLLI), and 353-373 (LFGI…IIGV).

It belongs to the dicarboxylate/amino acid:cation symporter (DAACS) (TC 2.A.23) family.

It is found in the cell inner membrane. The catalysed reaction is L-serine(in) + Na(+)(in) = L-serine(out) + Na(+)(out). It carries out the reaction L-threonine(in) + Na(+)(in) = L-threonine(out) + Na(+)(out). Its function is as follows. Involved in the import of serine and threonine into the cell, with the concomitant import of sodium (symport system). The protein is Serine/threonine transporter SstT of Pseudomonas putida (strain ATCC 700007 / DSM 6899 / JCM 31910 / BCRC 17059 / LMG 24140 / F1).